The following is a 351-amino-acid chain: DNA polymerase IV (351 aa).

A UmuC domain is found at Ile4–Gly185. Asp8 and Asp103 together coordinate Mg(2+). Residue Glu104 is part of the active site.

The protein belongs to the DNA polymerase type-Y family. As to quaternary structure, monomer. It depends on Mg(2+) as a cofactor.

The protein resides in the cytoplasm. It catalyses the reaction DNA(n) + a 2'-deoxyribonucleoside 5'-triphosphate = DNA(n+1) + diphosphate. Its function is as follows. Poorly processive, error-prone DNA polymerase involved in untargeted mutagenesis. Copies undamaged DNA at stalled replication forks, which arise in vivo from mismatched or misaligned primer ends. These misaligned primers can be extended by PolIV. Exhibits no 3'-5' exonuclease (proofreading) activity. May be involved in translesional synthesis, in conjunction with the beta clamp from PolIII. The sequence is that of DNA polymerase IV from Escherichia coli O157:H7.